We begin with the raw amino-acid sequence, 491 residues long: Chromosomal replication initiator protein DnaA (491 aa).

Residues 1–69 form a domain I, interacts with DnaA modulators region; sequence MTTWNKCLKK…TIQEFHDGDL (69 aa). Positions 69 to 154 are domain II; that stretch reads LLIEYSNKKF…KDDQEYSFGL (86 aa). A disordered region spans residues 106 to 126; the sequence is DSEETSLNQEPKKSQKKLSSK. The interval 155–371 is domain III, AAA+ region; the sequence is PLKEKYVFDS…GALNRVLTTS (217 aa). Residues glycine 199, glycine 201, lysine 202, and threonine 203 each contribute to the ATP site. Positions 372-491 are domain IV, binds dsDNA; it reads KFNHKDPTIE…YELLLDKISR (120 aa).

Belongs to the DnaA family. Oligomerizes as a right-handed, spiral filament on DNA at oriC.

The protein resides in the cytoplasm. Functionally, plays an essential role in the initiation and regulation of chromosomal replication. ATP-DnaA binds to the origin of replication (oriC) to initiate formation of the DNA replication initiation complex once per cell cycle. Binds the DnaA box (a 9 base pair repeat at the origin) and separates the double-stranded (ds)DNA. Forms a right-handed helical filament on oriC DNA; dsDNA binds to the exterior of the filament while single-stranded (ss)DNA is stabiized in the filament's interior. The ATP-DnaA-oriC complex binds and stabilizes one strand of the AT-rich DNA unwinding element (DUE), permitting loading of DNA polymerase. After initiation quickly degrades to an ADP-DnaA complex that is not apt for DNA replication. Binds acidic phospholipids. This chain is Chromosomal replication initiator protein DnaA, found in Francisella philomiragia subsp. philomiragia (strain ATCC 25017 / CCUG 19701 / FSC 153 / O#319-036).